The sequence spans 296 residues: Probable xyloglucan endotransglucosylase/hydrolase 1 (296 aa).

The signal sequence occupies residues 1–22; the sequence is MGIIKGVLFSIVLINLSLVVFC. The GH16 domain maps to 23–221; that stretch reads GYPRRPVDVP…WANAPFTASY (199 aa). Glutamate 107 serves as the catalytic Nucleophile. Glutamate 111 (proton donor) is an active-site residue. Residue glutamate 111 participates in xyloglucan binding. N-linked (GlcNAc...) asparagine glycosylation occurs at asparagine 115. Xyloglucan-binding positions include 124–126, 134–136, 200–201, and glycine 205; these read QTN, NRE, and DW. 2 disulfide bridges follow: cysteine 229/cysteine 240 and cysteine 277/cysteine 290. Position 282 (arginine 282) interacts with xyloglucan.

Belongs to the glycosyl hydrolase 16 family. XTH group 1 subfamily. In terms of processing, contains at least one intrachain disulfide bond essential for its enzymatic activity.

The protein localises to the secreted. It is found in the cell wall. Its subcellular location is the extracellular space. The protein resides in the apoplast. The catalysed reaction is breaks a beta-(1-&gt;4) bond in the backbone of a xyloglucan and transfers the xyloglucanyl segment on to O-4 of the non-reducing terminal glucose residue of an acceptor, which can be a xyloglucan or an oligosaccharide of xyloglucan.. In terms of biological role, catalyzes xyloglucan endohydrolysis (XEH) and/or endotransglycosylation (XET). Cleaves and religates xyloglucan polymers, an essential constituent of the primary cell wall, and thereby participates in cell wall construction of growing tissues. This Solanum lycopersicum (Tomato) protein is Probable xyloglucan endotransglucosylase/hydrolase 1 (XTH1).